The chain runs to 464 residues: Protein FAM90A7 (464 aa).

Disordered stretches follow at residues 1–42 (MMAR…DPRL), 69–387 (VPAT…AGHD), and 410–437 (AAPS…SEAP). Basic and acidic residues-rich tracts occupy residues 74-89 (GKKE…KPRA) and 97-111 (NKDK…RQQD). A compositionally biased stretch (low complexity) spans 180–197 (LASLSPLRKASLSSSSSL).

Belongs to the FAM90 family.

The protein is Protein FAM90A7 of Homo sapiens (Human).